Consider the following 932-residue polypeptide: 2-oxoglutarate dehydrogenase E1 component (932 aa).

This sequence belongs to the alpha-ketoglutarate dehydrogenase family. Homodimer. Part of the 2-oxoglutarate dehydrogenase (OGDH) complex composed of E1 (2-oxoglutarate dehydrogenase), E2 (dihydrolipoamide succinyltransferase) and E3 (dihydrolipoamide dehydrogenase); the complex contains multiple copies of the three enzymatic components (E1, E2 and E3). Thiamine diphosphate is required as a cofactor.

It carries out the reaction N(6)-[(R)-lipoyl]-L-lysyl-[protein] + 2-oxoglutarate + H(+) = N(6)-[(R)-S(8)-succinyldihydrolipoyl]-L-lysyl-[protein] + CO2. Its function is as follows. E1 component of the 2-oxoglutarate dehydrogenase (OGDH) complex which catalyzes the decarboxylation of 2-oxoglutarate, the first step in the conversion of 2-oxoglutarate to succinyl-CoA and CO(2). The polypeptide is 2-oxoglutarate dehydrogenase E1 component (Staphylococcus aureus (strain JH9)).